Consider the following 313-residue polypeptide: Secretory carrier-associated membrane protein 4 (313 aa).

Positions 1 to 69 (MAGRSRYDNP…LPPEPADFYN (69 aa)) are disordered. Topologically, residues 1–148 (MAGRSRYDNP…EIPVHLQRTQ (148 aa)) are cytoplasmic. Residues 85 to 116 (MKTREKELLAKEAELNRREKEIKRREEAAARA) adopt a coiled-coil conformation. 4 helical membrane passes run 149 to 169 (YVAF…IICV), 181 to 201 (IWFL…YLWY), 216 to 236 (FGWF…AAVS), and 255 to 275 (LIGN…MFCL). Residues 276 to 313 (ESLLSMWVIQRVYLYFRGSGKEAEMKREAARSAARAAF) are Cytoplasmic-facing.

It belongs to the SCAMP family.

Its subcellular location is the cell membrane. The protein localises to the cytoplasmic vesicle. It is found in the secretory vesicle membrane. Probably involved in membrane trafficking. The chain is Secretory carrier-associated membrane protein 4 (SCAMP4) from Oryza sativa subsp. japonica (Rice).